A 493-amino-acid polypeptide reads, in one-letter code: Tripartite motif-containing protein 5 (493 aa).

Position 2 is an N-acetylalanine (alanine 2). Residues 15–59 (CPICLELLTQPLSLDCGHSFCQACLTANHKKSMLDKGESSCPVCR) form an RING-type zinc finger. Serine 86 is subject to Phosphoserine. The B box-type zinc finger occupies 90–132 (QKVDHCARHGEKLLLFCQEDGKVICWLCERSQEHRGHHTFLTE). Residues cysteine 95, histidine 98, cysteine 117, and histidine 123 each coordinate Zn(2+). Positions 130–241 (LTEEVAREYQ…ISDLEHRLQG (112 aa)) form a coiled coil. The required for interaction with GABARAP and for autophagy stretch occupies residues 185–198 (FEQLRDILDWEESN). Residues 281–493 (LKGMLEVFRE…VPMTLCSPSS (213 aa)) form the B30.2/SPRY domain.

It belongs to the TRIM/RBCC family. Can form homodimers and homotrimers. In addition to lower-order dimerization, also exhibits a higher-order multimerization and both low- and high-order multimerizations are essential for its restriction activity. Isoform Delta interacts with BTBD1 and BTBD2. Interacts with PSMC4, PSMC5, PSMD7 and HSPA8/HSC70. Interacts (via B30.2/SPRY domain) with HSPA1A/B. Interacts with PSMC2, MAP3K7/TAK1, TAB2 and TAB3. Interacts with SQSTM1. Interacts with TRIM6 and TRIM34. Interacts with ULK1 (phosphorylated form), GABARAP, GABARAPL1, GABARAPL2, MAP1LC3A, MAP1LC3C and BECN1. In terms of processing, degraded in a proteasome-independent fashion in the absence of viral infection but in a proteasome-dependent fashion following exposure to restriction sensitive virus. Post-translationally, autoubiquitinated in a RING finger- and UBE2D2-dependent manner. Monoubiquitinated by TRIM21. Deubiquitinated by Yersinia YopJ. Ubiquitination may not lead to proteasomal degradation.

It localises to the cytoplasm. The protein localises to the nucleus. It catalyses the reaction S-ubiquitinyl-[E2 ubiquitin-conjugating enzyme]-L-cysteine + [acceptor protein]-L-lysine = [E2 ubiquitin-conjugating enzyme]-L-cysteine + N(6)-ubiquitinyl-[acceptor protein]-L-lysine.. It participates in protein modification; protein ubiquitination. Its function is as follows. Capsid-specific restriction factor that prevents infection from non-host-adapted retroviruses. Blocks viral replication early in the life cycle, after viral entry but before reverse transcription. In addition to acting as a capsid-specific restriction factor, also acts as a pattern recognition receptor that activates innate immune signaling in response to the retroviral capsid lattice. Binding to the viral capsid triggers its E3 ubiquitin ligase activity, and in concert with the heterodimeric ubiquitin conjugating enzyme complex UBE2V1-UBE2N (also known as UBC13-UEV1A complex) generates 'Lys-63'-linked polyubiquitin chains, which in turn are catalysts in the autophosphorylation of the MAP3K7/TAK1 complex (includes TAK1, TAB2, and TAB3). Activation of the MAP3K7/TAK1 complex by autophosphorylation results in the induction and expression of NF-kappa-B and MAPK-responsive inflammatory genes, thereby leading to an innate immune response in the infected cell. Restricts infection by N-tropic murine leukemia virus (N-MLV), equine infectious anemia virus (EIAV), simian immunodeficiency virus of macaques (SIVmac), feline immunodeficiency virus (FIV), and bovine immunodeficiency virus (BIV). Plays a role in regulating autophagy through activation of autophagy regulator BECN1 by causing its dissociation from its inhibitors BCL2 and TAB2. Also plays a role in autophagy by acting as a selective autophagy receptor which recognizes and targets HIV-1 capsid protein p24 for autophagic destruction. The protein is Tripartite motif-containing protein 5 (TRIM5) of Homo sapiens (Human).